The primary structure comprises 300 residues: TLR adapter interacting with SLC15A4 on the lysosome (300 aa).

Positions 289–293 (SLHIS) match the pLxIS motif motif. Ser293 bears the Phosphoserine mark.

As to quaternary structure, interacts (via pLxIS motif) with IRF5; leading to IRF5 activation. Interacts with SLC15A4; leading to its recruitment to endolysosome. Post-translationally, the phosphorylated pLxIS motif constitutes an IRF5-binding motif, leading to recruitment of the transcription factor IRF5 to induce type-I interferons and other cytokines.

The protein localises to the lysosome membrane. Its subcellular location is the endosome membrane. It localises to the nucleus. It is found in the cytoplasm. Its function is as follows. Innate immune adapter that mediates the recruitment and activation of IRF5 downstream of endolysosomal toll-like receptors TLR7, TLR8 and TLR9. Following recruitment to endolysosome by SLC15A4 downstream of TLR7, TLR8 and TLR9, specifically recruits IRF5 transcription factor via its pLxIS motif, leading to IRF5 activation and subsequent expression of type I interferons. Plays a role in the regulation of endolysosomal pH in immune cells such as B-cells, dendritic cells and monocytes. This Bos taurus (Bovine) protein is TLR adapter interacting with SLC15A4 on the lysosome.